Here is a 186-residue protein sequence, read N- to C-terminus: Large ribosomal subunit protein uL5 (186 aa).

Belongs to the universal ribosomal protein uL5 family. In terms of assembly, part of the 50S ribosomal subunit; contacts the 5S rRNA and probably tRNA. Forms a bridge to the 30S subunit in the 70S ribosome.

This is one of the proteins that bind and probably mediate the attachment of the 5S RNA into the large ribosomal subunit, where it forms part of the central protuberance. In the 70S ribosome it contacts protein S13 of the 30S subunit (bridge B1b), connecting the 2 subunits; this bridge is implicated in subunit movement. May contact the P site tRNA; the 5S rRNA and some of its associated proteins might help stabilize positioning of ribosome-bound tRNAs. The sequence is that of Large ribosomal subunit protein uL5 from Pyrococcus furiosus (strain ATCC 43587 / DSM 3638 / JCM 8422 / Vc1).